Consider the following 292-residue polypeptide: Bifunctional protein FolD (292 aa).

Residues 169-171 (GRS) and Ser-194 contribute to the NADP(+) site.

It belongs to the tetrahydrofolate dehydrogenase/cyclohydrolase family. In terms of assembly, homodimer.

It carries out the reaction (6R)-5,10-methylene-5,6,7,8-tetrahydrofolate + NADP(+) = (6R)-5,10-methenyltetrahydrofolate + NADPH. It catalyses the reaction (6R)-5,10-methenyltetrahydrofolate + H2O = (6R)-10-formyltetrahydrofolate + H(+). The protein operates within one-carbon metabolism; tetrahydrofolate interconversion. Catalyzes the oxidation of 5,10-methylenetetrahydrofolate to 5,10-methenyltetrahydrofolate and then the hydrolysis of 5,10-methenyltetrahydrofolate to 10-formyltetrahydrofolate. In Nostoc punctiforme (strain ATCC 29133 / PCC 73102), this protein is Bifunctional protein FolD.